Here is a 186-residue protein sequence, read N- to C-terminus: MSVADIKKGVEQKMQRSIEAFKNDLAKIRTGRAHTGLLDHVQVDYYGSMVPISQVANLTLVDARTIGVQPWEKNMVAKVEKAIREADLGLNPATAGDLIRVPMPALTEERRRELTKVVKGEGETAKVAVRNLRRDANEQLKKLVKDKEISEDDERRAGDDVQKLTDKHVAEIDKLVQSKEAEIMTV.

Belongs to the RRF family.

The protein localises to the cytoplasm. In terms of biological role, responsible for the release of ribosomes from messenger RNA at the termination of protein biosynthesis. May increase the efficiency of translation by recycling ribosomes from one round of translation to another. This is Ribosome-recycling factor from Burkholderia thailandensis (strain ATCC 700388 / DSM 13276 / CCUG 48851 / CIP 106301 / E264).